The following is a 572-amino-acid chain: Transcription factor E3 (572 aa).

Position 47 is a phosphoserine; by MTOR (serine 47). The span at 87–125 (TTPATLSASSSAGGSRTPAMSSSSSRVLLRQQLMRAQAQ) shows a compositional bias: low complexity. A disordered region spans residues 87–152 (TTPATLSASS…SPAPASPAIS (66 aa)). Over residues 126-135 (EQERRERREQ) the composition is skewed to basic and acidic residues. Arginine 187 carries the post-translational modification Asymmetric dimethylarginine. Residues 210–248 (LASQALTPPPGPSSAQPLPAPETAHATGPTGSAPNSPMA) are disordered. The tract at residues 259 to 270 (EIDDVIDEIISL) is strong transcription activation domain. Serine 320 is modified (phosphoserine; by MTOR). A Glycyl lysine isopeptide (Lys-Gly) (interchain with G-Cter in SUMO2) cross-link involves residue lysine 338. The bHLH domain occupies 345 to 398 (QKKDNHNLIERRRRFNINDRIKELGTLIPKSNDPEMRWNKGTILKASVDYIRKL). The Nuclear localization signal signature appears at 355–358 (RRRR). Positions 408-429 (LESRQRSLEQANRSLQLRIQEL) are leucine-zipper. Disordered regions lie at residues 439-495 (PVPP…APPS) and 530-572 (VGGL…EEES). Residues 446-457 (LLSLTTSSVSDS) show a composition bias toward low complexity. Phosphoserine is present on residues serine 539, serine 545, serine 551, serine 553, serine 557, and serine 565. Positions 543-572 (AASDPLLSSVSPAVSKASSRRSSFSMEEES) are enriched in low complexity.

This sequence belongs to the MiT/TFE family. As to quaternary structure, homodimer and heterodimer; with TFEB or MITF. Interacts with RRAGC/RagC GDP-bound and RRAGD/RagD GDP-bound; promoting its recruitment to lysosomal membrane in the presence of nutrients. Interacts with TSC22D1; the interaction is enhanced in the presence of TGF-beta. In terms of processing, sumoylated; does not affect dimerization with MITF. Phosphorylation ar Ser-47 and Ser-320 by MTOR via non-canonical mTORC1 pathway regulates its stability and subcellular location, respectively. When nutrients are present, phosphorylation by MTOR at Ser-47 promotes ubiquitination by the SCF(BTRC) complex, followed by degradation. When nutrients are present, phosphorylation by MTOR at Ser-320 also promotes association with 14-3-3/YWHA adapters and retention in the cytosol. Phosphorylation at Ser-47 plays a more critical role than phosphorylation at Ser-320 for TFE3 inactivation. Inhibition of mTORC1, starvation and lysosomal disruption, promotes dephosphorylation and transcription factor activity. Post-translationally, ubiquitinated by the SCF(BTRC) and SCF(FBXW11) complexes following phosphorylation at Ser-47 by MTOR, leading to its degradation by the proteasome. As to expression, widely expressed.

The protein localises to the cytoplasm. It localises to the cytosol. The protein resides in the nucleus. It is found in the lysosome membrane. Transcription factor that acts as a master regulator of lysosomal biogenesis and immune response. Specifically recognizes and binds E-box sequences (5'-CANNTG-3'); efficient DNA-binding requires dimerization with itself or with another MiT/TFE family member such as TFEB or MITF. Involved in the cellular response to amino acid availability by acting downstream of MTOR: in the presence of nutrients, TFE3 phosphorylation by MTOR promotes its inactivation. Upon starvation or lysosomal stress, inhibition of MTOR induces TFE3 dephosphorylation, resulting in transcription factor activity. Specifically recognizes and binds the CLEAR-box sequence (5'-GTCACGTGAC-3') present in the regulatory region of many lysosomal genes, leading to activate their expression, thereby playing a central role in expression of lysosomal genes. Maintains the pluripotent state of embryonic stem cells by promoting the expression of genes such as ESRRB; mTOR-dependent TFE3 cytosolic retention and inactivation promotes exit from pluripotency. Required to maintain the naive pluripotent state of hematopoietic stem cell; mTOR-dependent cytoplasmic retention of TFE3 promotes the exit of hematopoietic stem cell from pluripotency. TFE3 activity is also involved in the inhibition of neuronal progenitor differentiation. Acts as a positive regulator of browning of adipose tissue by promoting expression of target genes; mTOR-dependent phosphorylation promotes cytoplasmic retention of TFE3 and inhibits browning of adipose tissue. In association with TFEB, activates the expression of CD40L in T-cells, thereby playing a role in T-cell-dependent antibody responses in activated CD4(+) T-cells and thymus-dependent humoral immunity. Specifically recognizes the MUE3 box, a subset of E-boxes, present in the immunoglobulin enhancer. It also binds very well to a USF/MLTF site. Promotes TGF-beta-induced transcription of COL1A2; via its interaction with TSC22D1 at E-boxes in the gene proximal promoter. May regulate lysosomal positioning in response to nutrient deprivation by promoting the expression of PIP4P1. This is Transcription factor E3 from Mus musculus (Mouse).